The chain runs to 294 residues: ATP synthase gamma chain (294 aa).

The protein belongs to the ATPase gamma chain family. F-type ATPases have 2 components, CF(1) - the catalytic core - and CF(0) - the membrane proton channel. CF(1) has five subunits: alpha(3), beta(3), gamma(1), delta(1), epsilon(1). CF(0) has three main subunits: a, b and c.

The protein resides in the cell inner membrane. In terms of biological role, produces ATP from ADP in the presence of a proton gradient across the membrane. The gamma chain is believed to be important in regulating ATPase activity and the flow of protons through the CF(0) complex. The chain is ATP synthase gamma chain from Caulobacter sp. (strain K31).